The following is a 432-amino-acid chain: Serine/threonine-protein kinase CDG1 (432 aa).

Residues cysteine 4 and cysteine 6 are each lipidated (S-palmitoyl cysteine). The span at 15–24 (LKDKSHKRSI) shows a compositional bias: basic residues. The disordered stretch occupies residues 15–47 (LKDKSHKRSIRNQTSSSSAQPAGTAKEVDSSSS). The segment covering 25–35 (RNQTSSSSAQP) has biased composition (polar residues). Residues serine 44 and serine 47 each carry the phosphoserine modification. In terms of domain architecture, Protein kinase spans 74–354 (FRNESLIGRG…SQVVECLKYI (281 aa)). ATP-binding positions include 80–88 (IGRGGFGTV) and lysine 102. Phosphotyrosine is present on tyrosine 147. Aspartate 200 acts as the Proton acceptor in catalysis. Residues serine 204 and serine 234 each carry the phosphoserine modification. Phosphothreonine occurs at positions 235 and 240. Tyrosine 248 carries the post-translational modification Phosphotyrosine.

The protein belongs to the protein kinase superfamily. Ser/Thr protein kinase family. In terms of assembly, interacts with BSU1, BSL1 and BRI1. Post-translationally, phosphorylated at Ser-44, Ser-47 and Ser-234 by BRI1. Expressed at high levels in the stamen and pollen grains. Expressed at a very low level in vegetative tissues.

The protein resides in the cell membrane. The catalysed reaction is L-seryl-[protein] + ATP = O-phospho-L-seryl-[protein] + ADP + H(+). The enzyme catalyses L-threonyl-[protein] + ATP = O-phospho-L-threonyl-[protein] + ADP + H(+). With respect to regulation, activated by phosphorylation at Ser-234. Its function is as follows. Serine/threonine-protein kinase involved in the positive regulation of brassinosteroid (BR) signaling and plant growth. Mediates BR signal transduction from BRI1 receptor kinase to BSU1 phosphatase. After activation by phosphorylation at Ser-234 by BRI1, CDG1 phosphorylates BSU1 at 'Ser-764' in the phosphatase domain, increasing the ability of BSU1 to inactivate the negative regulator of BR signaling ASK7/BIN2 by dephosphorylation at 'Tyr-200'. The full kinase activity of CDG1 is required for its biological function. This chain is Serine/threonine-protein kinase CDG1, found in Arabidopsis thaliana (Mouse-ear cress).